The following is a 300-amino-acid chain: MSWTTIESDAGVFTDLIENLGVKDVEVDELYSLDVDSLRQFPDIYGIIFLFKWNSKVDKPDGTMDYDSMDNIFFAKQVINNACATQALLSVLLNHSDEIDLGTTLSEFKDFSKTLPPELKGEALGNSEHIRCCHNSFARSDPFISEEVRAATDEDEVYHFIAYTNINNVFYELDGLQAAPINHGSCTKEEFAEKAVSVIQARIANYDPAEIRFNLMVICKDKKASLLTREDLTDEEKAASIAVEDEKRLRWKRENQLRRHNFVGLFVELSKLLVKDRIDKNTWNSTLETAKAKYASQKRP.

A UCH catalytic domain is found at 2 to 220 (SWTTIESDAG…IRFNLMVICK (219 aa)). Catalysis depends on Cys83, which acts as the Nucleophile. The active-site Proton donor is the His159. In terms of domain architecture, ULD spans 261–290 (NFVGLFVELSKLLVKDRIDKNTWNSTLETA).

This sequence belongs to the peptidase C12 family. As to quaternary structure, component of the 26S proteasome. Interacts with rpn10.

Its subcellular location is the nucleus. It carries out the reaction Thiol-dependent hydrolysis of ester, thioester, amide, peptide and isopeptide bonds formed by the C-terminal Gly of ubiquitin (a 76-residue protein attached to proteins as an intracellular targeting signal).. Functionally, ubiquitin-protein hydrolase is involved both in the processing of ubiquitin precursors and of ubiquitinated proteins. This enzyme is a thiol protease that recognizes and hydrolyzes a peptide bond at the C-terminal glycine of ubiquitin. The polypeptide is Ubiquitin carboxyl-terminal hydrolase 2 (uch2) (Schizosaccharomyces pombe (strain 972 / ATCC 24843) (Fission yeast)).